The chain runs to 408 residues: Argininosuccinate synthase (408 aa).

An ATP-binding site is contributed by 8-16 (AYSGGLDTS). Position 86 (Tyr86) interacts with L-citrulline. Gly116 provides a ligand contact to ATP. Thr118, Asn122, and Asp123 together coordinate L-aspartate. Asn122 is an L-citrulline binding site. Residues Arg126, Ser174, Glu259, and Tyr271 each coordinate L-citrulline.

The protein belongs to the argininosuccinate synthase family. Type 1 subfamily. Homotetramer.

The protein localises to the cytoplasm. The catalysed reaction is L-citrulline + L-aspartate + ATP = 2-(N(omega)-L-arginino)succinate + AMP + diphosphate + H(+). Its pathway is amino-acid biosynthesis; L-arginine biosynthesis; L-arginine from L-ornithine and carbamoyl phosphate: step 2/3. In Leuconostoc mesenteroides subsp. mesenteroides (strain ATCC 8293 / DSM 20343 / BCRC 11652 / CCM 1803 / JCM 6124 / NCDO 523 / NBRC 100496 / NCIMB 8023 / NCTC 12954 / NRRL B-1118 / 37Y), this protein is Argininosuccinate synthase.